Reading from the N-terminus, the 314-residue chain is 4-hydroxy-3-methylbut-2-enyl diphosphate reductase (314 aa).

Position 12 (Cys12) interacts with [4Fe-4S] cluster. Residues His41 and His74 each contribute to the (2E)-4-hydroxy-3-methylbut-2-enyl diphosphate site. 2 residues coordinate dimethylallyl diphosphate: His41 and His74. 2 residues coordinate isopentenyl diphosphate: His41 and His74. Residue Cys96 coordinates [4Fe-4S] cluster. Residue His124 coordinates (2E)-4-hydroxy-3-methylbut-2-enyl diphosphate. His124 is a dimethylallyl diphosphate binding site. His124 contributes to the isopentenyl diphosphate binding site. Glu126 acts as the Proton donor in catalysis. Thr167 is a (2E)-4-hydroxy-3-methylbut-2-enyl diphosphate binding site. Cys197 is a binding site for [4Fe-4S] cluster. (2E)-4-hydroxy-3-methylbut-2-enyl diphosphate-binding residues include Ser225, Ser226, Asn227, and Ser269. Positions 225, 226, 227, and 269 each coordinate dimethylallyl diphosphate. 4 residues coordinate isopentenyl diphosphate: Ser225, Ser226, Asn227, and Ser269.

The protein belongs to the IspH family. [4Fe-4S] cluster is required as a cofactor.

The catalysed reaction is isopentenyl diphosphate + 2 oxidized [2Fe-2S]-[ferredoxin] + H2O = (2E)-4-hydroxy-3-methylbut-2-enyl diphosphate + 2 reduced [2Fe-2S]-[ferredoxin] + 2 H(+). It carries out the reaction dimethylallyl diphosphate + 2 oxidized [2Fe-2S]-[ferredoxin] + H2O = (2E)-4-hydroxy-3-methylbut-2-enyl diphosphate + 2 reduced [2Fe-2S]-[ferredoxin] + 2 H(+). It functions in the pathway isoprenoid biosynthesis; dimethylallyl diphosphate biosynthesis; dimethylallyl diphosphate from (2E)-4-hydroxy-3-methylbutenyl diphosphate: step 1/1. Its pathway is isoprenoid biosynthesis; isopentenyl diphosphate biosynthesis via DXP pathway; isopentenyl diphosphate from 1-deoxy-D-xylulose 5-phosphate: step 6/6. Catalyzes the conversion of 1-hydroxy-2-methyl-2-(E)-butenyl 4-diphosphate (HMBPP) into a mixture of isopentenyl diphosphate (IPP) and dimethylallyl diphosphate (DMAPP). Acts in the terminal step of the DOXP/MEP pathway for isoprenoid precursor biosynthesis. In Actinobacillus pleuropneumoniae serotype 5b (strain L20), this protein is 4-hydroxy-3-methylbut-2-enyl diphosphate reductase.